The sequence spans 277 residues: Mitochondrial outer membrane protein porin 5 (277 aa).

The protein belongs to the eukaryotic mitochondrial porin (TC 1.B.8.1) family.

The protein localises to the mitochondrion outer membrane. Its function is as follows. Forms a channel through the mitochondrial outer membrane that allows diffusion of small hydrophilic molecules. The channel adopts an open conformation at low or zero membrane potential and a closed conformation at potentials above 30-40 mV. The open state has a weak anion selectivity whereas the closed state is cation-selective. The polypeptide is Mitochondrial outer membrane protein porin 5 (VDAC5) (Oryza sativa subsp. japonica (Rice)).